Here is a 432-residue protein sequence, read N- to C-terminus: Neuronal pentraxin-2 (432 aa).

An N-terminal signal peptide occupies residues 1-14; sequence MLALLTAGVALAVA. Asparagine 149 and asparagine 190 each carry an N-linked (GlcNAc...) asparagine glycan. A Pentraxin (PTX) domain is found at 224–425; that stretch reads DAFKVSLPLR…GASKWPVETC (202 aa). Residues cysteine 254 and cysteine 314 are joined by a disulfide bond. Residues asparagine 278, glutamate 356, glutamine 357, aspartate 358, and glutamine 368 each contribute to the Ca(2+) site. N-linked (GlcNAc...) asparagine glycosylation is present at asparagine 394.

Homooligomer or heterooligomer (probably pentamer) with neuronal pentraxin receptor (NPTXR). Requires Ca(2+) as cofactor.

It is found in the secreted. Likely to play role in the modification of cellular properties that underlie long-term plasticity. Binds to agar matrix in a calcium-dependent manner. This chain is Neuronal pentraxin-2 (Nptx2), found in Rattus norvegicus (Rat).